A 92-amino-acid chain; its full sequence is Ig kappa chain V region 3381 (92 aa).

Residues 1-23 are framework-1; sequence AFELTQTPASVEAAVGGTVTINC. The segment at 24–34 is complementarity-determining-1; it reads QASESISNWLA. A framework-2 region spans residues 35–49; sequence WYQQKPGQPXKLLIY. Positions 50-56 are complementarity-determining-2; sequence KASTLAS. Residues 57–88 are framework-3; sequence GVSSRFKGSGSGTQFTLTISDLECADAATYYC. The tract at residues 89–92 is complementarity-determining-3; sequence QSTD.

In Oryctolagus cuniculus (Rabbit), this protein is Ig kappa chain V region 3381.